The following is a 393-amino-acid chain: Elongation factor Tu (393 aa).

In terms of domain architecture, tr-type G spans 10 to 203 (KPHVNIGTIG…AVDSYIPQPV (194 aa)). Residues 19 to 26 (GHVDHGKT) form a G1 region. Residue 19–26 (GHVDHGKT) coordinates GTP. Thr26 provides a ligand contact to Mg(2+). The G2 stretch occupies residues 60 to 64 (GITIS). The tract at residues 81-84 (DCPG) is G3. GTP contacts are provided by residues 81–85 (DCPGH) and 136–139 (NKVD). Residues 136–139 (NKVD) are G4. The segment at 173–175 (SAL) is G5.

Belongs to the TRAFAC class translation factor GTPase superfamily. Classic translation factor GTPase family. EF-Tu/EF-1A subfamily. In terms of assembly, monomer.

It is found in the cytoplasm. It carries out the reaction GTP + H2O = GDP + phosphate + H(+). Functionally, GTP hydrolase that promotes the GTP-dependent binding of aminoacyl-tRNA to the A-site of ribosomes during protein biosynthesis. In Chlorobaculum tepidum (strain ATCC 49652 / DSM 12025 / NBRC 103806 / TLS) (Chlorobium tepidum), this protein is Elongation factor Tu.